The following is a 649-amino-acid chain: PH and SEC7 domain-containing protein 1 (649 aa).

Disordered stretches follow at residues 1 to 22 (MPHSGLLKSPVPFLPGTSPSAD) and 57 to 161 (PGPT…LDST). Over residues 70–88 (PPQPPAPRPDPPAPAPLAP) the composition is skewed to pro residues. The span at 120-132 (PRKELPSPSHSED) shows a compositional bias: basic and acidic residues. In terms of domain architecture, SEC7 spans 137 to 331 (GAAPLGSEPP…KALYSSIKNE (195 aa)). Phosphoserine is present on serine 345. The PH domain occupies 381–494 (AVYKHGALVR…WITRINVVAA (114 aa)). Coiled coils occupy residues 523–549 (LSQEEQVRTHEAKLKAMASELREHRAA) and 581–608 (AALLRVKMKAASEELDAIEAALAQAGST). Residues 601-649 (ALAQAGSTEEGCPPPHSSPSLQPNPTSQPRAQRPGSEARAGAGSTRPKP) are disordered. Residues 618 to 630 (SPSLQPNPTSQPR) are compositionally biased toward polar residues.

It belongs to the PSD family. As to quaternary structure, interacts with ACTN1. Interacts (ARF6-bound form) with KCNK1; does not interact with KCNK1 in the absence of ARF6. As to expression, brain. Expressed in the hippocampal and dentate neuronal layers, cerebellar cortex, molecular layer of the hippocampus and dentate gyrus.

The protein localises to the cell membrane. The protein resides in the cell projection. Its subcellular location is the ruffle membrane. It localises to the cleavage furrow. In terms of biological role, guanine nucleotide exchange factor for ARF6. Induces cytoskeletal remodeling. The polypeptide is PH and SEC7 domain-containing protein 1 (Psd) (Rattus norvegicus (Rat)).